Reading from the N-terminus, the 554-residue chain is Dihydroxy-acid dehydratase (554 aa).

Mg(2+) is bound at residue Asp78. [2Fe-2S] cluster is bound at residue Cys119. Mg(2+) contacts are provided by Asp120 and Lys121. The residue at position 121 (Lys121) is an N6-carboxylysine. Cys191 contacts [2Fe-2S] cluster. Glu442 serves as a coordination point for Mg(2+). Ser468 (proton acceptor) is an active-site residue.

This sequence belongs to the IlvD/Edd family. As to quaternary structure, homodimer. [2Fe-2S] cluster serves as cofactor. Requires Mg(2+) as cofactor.

It catalyses the reaction (2R)-2,3-dihydroxy-3-methylbutanoate = 3-methyl-2-oxobutanoate + H2O. The enzyme catalyses (2R,3R)-2,3-dihydroxy-3-methylpentanoate = (S)-3-methyl-2-oxopentanoate + H2O. It functions in the pathway amino-acid biosynthesis; L-isoleucine biosynthesis; L-isoleucine from 2-oxobutanoate: step 3/4. Its pathway is amino-acid biosynthesis; L-valine biosynthesis; L-valine from pyruvate: step 3/4. Its function is as follows. Functions in the biosynthesis of branched-chain amino acids. Catalyzes the dehydration of (2R,3R)-2,3-dihydroxy-3-methylpentanoate (2,3-dihydroxy-3-methylvalerate) into 2-oxo-3-methylpentanoate (2-oxo-3-methylvalerate) and of (2R)-2,3-dihydroxy-3-methylbutanoate (2,3-dihydroxyisovalerate) into 2-oxo-3-methylbutanoate (2-oxoisovalerate), the penultimate precursor to L-isoleucine and L-valine, respectively. The chain is Dihydroxy-acid dehydratase from Acetivibrio thermocellus (strain ATCC 27405 / DSM 1237 / JCM 9322 / NBRC 103400 / NCIMB 10682 / NRRL B-4536 / VPI 7372) (Clostridium thermocellum).